The following is an 84-amino-acid chain: ATP synthase subunit c (84 aa).

2 consecutive transmembrane segments (helical) span residues V8–I28 and I56–L76.

This sequence belongs to the ATPase C chain family. In terms of assembly, F-type ATPases have 2 components, F(1) - the catalytic core - and F(0) - the membrane proton channel. F(1) has five subunits: alpha(3), beta(3), gamma(1), delta(1), epsilon(1). F(0) has three main subunits: a(1), b(2) and c(10-14). The alpha and beta chains form an alternating ring which encloses part of the gamma chain. F(1) is attached to F(0) by a central stalk formed by the gamma and epsilon chains, while a peripheral stalk is formed by the delta and b chains.

It localises to the cell membrane. Functionally, f(1)F(0) ATP synthase produces ATP from ADP in the presence of a proton or sodium gradient. F-type ATPases consist of two structural domains, F(1) containing the extramembraneous catalytic core and F(0) containing the membrane proton channel, linked together by a central stalk and a peripheral stalk. During catalysis, ATP synthesis in the catalytic domain of F(1) is coupled via a rotary mechanism of the central stalk subunits to proton translocation. In terms of biological role, key component of the F(0) channel; it plays a direct role in translocation across the membrane. A homomeric c-ring of between 10-14 subunits forms the central stalk rotor element with the F(1) delta and epsilon subunits. This is ATP synthase subunit c from Clostridium novyi (strain NT).